Here is a 455-residue protein sequence, read N- to C-terminus: Argininosuccinate lyase (455 aa).

This sequence belongs to the lyase 1 family. Argininosuccinate lyase subfamily.

The protein localises to the cytoplasm. The catalysed reaction is 2-(N(omega)-L-arginino)succinate = fumarate + L-arginine. Its pathway is amino-acid biosynthesis; L-arginine biosynthesis; L-arginine from L-ornithine and carbamoyl phosphate: step 3/3. The chain is Argininosuccinate lyase from Roseiflexus sp. (strain RS-1).